Here is a 648-residue protein sequence, read N- to C-terminus: Serine/threonine-protein kinase PrkC (648 aa).

Topologically, residues 1–330 (MLIGKRISGR…KKNGKRKKWP (330 aa)) are cytoplasmic. Positions 11-271 (YQILRVIGGG…DMEADIKTAF (261 aa)) constitute a Protein kinase domain. ATP contacts are provided by residues 17–25 (IGGGGMANV) and K40. Catalysis depends on D134, which acts as the Proton acceptor. Phosphothreonine; by autocatalysis is present on residues T162, T163, T165, and T167. At S214 the chain carries Phosphoserine; by autocatalysis. A phosphothreonine; by autocatalysis mark is found at T290, T313, and T320. A helical membrane pass occupies residues 331 to 351 (WVLLTICLVFITAGILAVTVF). Residues 352–648 (PSLFMPKDVK…YKTIEYPKDE (297 aa)) lie on the Extracellular side of the membrane. PASTA domains follow at residues 356–424 (MPKD…YKST), 425–492 (GKAK…TVSI), and 493–559 (GPED…TFSL).

The protein belongs to the protein kinase superfamily. Ser/Thr protein kinase family. In terms of assembly, homodimer. In terms of processing, autophosphorylation on threonine residue(s) and serine residue considerably increases the kinase activity of the protein. Dephosphorylated in vitro by PrpC.

It localises to the spore membrane. It catalyses the reaction L-seryl-[protein] + ATP = O-phospho-L-seryl-[protein] + ADP + H(+). The enzyme catalyses L-threonyl-[protein] + ATP = O-phospho-L-threonyl-[protein] + ADP + H(+). Bryostatin activates PrkC activity and induces germination, whereas staurosporine inhibits PrkC and significantly reduced peptidoglycan-dependent germination. Kinase activity of isolated N-terminus stimulated by poly-L-lysine or myelin basic protein. Protein kinase that is responsible for triggering spore germination in response to muropeptides, signaling bacteria to exit dormancy. PrkC is thus a germination receptor that binds peptidoglycan fragments containing m-Dpm (meso-diaminopimelate), which act as spore germinants. Autophosphorylates and phosphorylates EF-G (elongation factor G, fusA); the latter modification is likely necessary for germination in response to peptidoglycan. Another group did not detect phosphorylation of EF-G. PrkC is a substrate in vitro of the cotranscribed phosphatase PrpC, which suggests that they form a functional couple in vivo. Might also be involved in sporulation and biofilm formation. Does not seem to be involved in stress response. This is Serine/threonine-protein kinase PrkC (prkC) from Bacillus subtilis (strain 168).